A 1297-amino-acid chain; its full sequence is DNA-directed RNA polymerase subunit beta' (1297 aa).

Residues C60, C62, C75, and C78 each coordinate Zn(2+). Residues D535, D537, and D539 each contribute to the Mg(2+) site. 4 residues coordinate Zn(2+): C883, C961, C968, and C971.

It belongs to the RNA polymerase beta' chain family. The RNAP catalytic core consists of 2 alpha, 1 beta, 1 beta' and 1 omega subunit. When a sigma factor is associated with the core the holoenzyme is formed, which can initiate transcription. Mg(2+) is required as a cofactor. It depends on Zn(2+) as a cofactor.

The catalysed reaction is RNA(n) + a ribonucleoside 5'-triphosphate = RNA(n+1) + diphosphate. In terms of biological role, DNA-dependent RNA polymerase catalyzes the transcription of DNA into RNA using the four ribonucleoside triphosphates as substrates. In Salinispora arenicola (strain CNS-205), this protein is DNA-directed RNA polymerase subunit beta'.